The following is a 366-amino-acid chain: Phospho-N-acetylmuramoyl-pentapeptide-transferase (366 aa).

Transmembrane regions (helical) follow at residues 27–47 (AAMF…IASL), 71–91 (TPTM…LLWA), 93–113 (LSNV…AIGF), 134–154 (LAIE…AAKI), 174–194 (ALLN…VSAG), 205–225 (GLAI…AYLA), 245–265 (LAVI…FNAP), 268–288 (AIFM…TVAV), 294–314 (IVMV…IIQV), and 343–363 (QVVI…LATL).

It belongs to the glycosyltransferase 4 family. MraY subfamily. Mg(2+) is required as a cofactor.

It is found in the cell inner membrane. The enzyme catalyses UDP-N-acetyl-alpha-D-muramoyl-L-alanyl-gamma-D-glutamyl-meso-2,6-diaminopimeloyl-D-alanyl-D-alanine + di-trans,octa-cis-undecaprenyl phosphate = di-trans,octa-cis-undecaprenyl diphospho-N-acetyl-alpha-D-muramoyl-L-alanyl-D-glutamyl-meso-2,6-diaminopimeloyl-D-alanyl-D-alanine + UMP. It functions in the pathway cell wall biogenesis; peptidoglycan biosynthesis. Its function is as follows. Catalyzes the initial step of the lipid cycle reactions in the biosynthesis of the cell wall peptidoglycan: transfers peptidoglycan precursor phospho-MurNAc-pentapeptide from UDP-MurNAc-pentapeptide onto the lipid carrier undecaprenyl phosphate, yielding undecaprenyl-pyrophosphoryl-MurNAc-pentapeptide, known as lipid I. This is Phospho-N-acetylmuramoyl-pentapeptide-transferase from Allorhizobium ampelinum (strain ATCC BAA-846 / DSM 112012 / S4) (Agrobacterium vitis (strain S4)).